Consider the following 180-residue polypeptide: Ribosome maturation factor RimM (180 aa).

In terms of domain architecture, PRC barrel spans 99–179 (NNEYYWKDIV…IVIKNWKQTF (81 aa)).

This sequence belongs to the RimM family. Binds ribosomal protein uS19.

Its subcellular location is the cytoplasm. An accessory protein needed during the final step in the assembly of 30S ribosomal subunit, possibly for assembly of the head region. Essential for efficient processing of 16S rRNA. May be needed both before and after RbfA during the maturation of 16S rRNA. It has affinity for free ribosomal 30S subunits but not for 70S ribosomes. The sequence is that of Ribosome maturation factor RimM from Buchnera aphidicola subsp. Baizongia pistaciae (strain Bp).